The following is a 778-amino-acid chain: General transcription and DNA repair factor IIH helicase subunit XPD/RAD3 (778 aa).

A Helicase ATP-binding domain is found at 7–285; the sequence is DLPVLFPYPK…KVDSQKLQDE (279 aa). 42–49 contacts ATP; it reads MPSGTGKT. The [4Fe-4S] cluster site is built by Cys-115, Cys-133, Cys-156, and Cys-191. The DEAH box motif lies at 235–238; the sequence is DEAH. A compositionally biased stretch (basic and acidic residues) spans 750 to 765; sequence SRKDQGGFIENENKEG. Residues 750–778 form a disordered region; that stretch reads SRKDQGGFIENENKEGEQDEDEDEDIEMQ. Residues 766-778 are compositionally biased toward acidic residues; sequence EQDEDEDEDIEMQ.

The protein belongs to the helicase family. RAD3/XPD subfamily. As to quaternary structure, component of the 7-subunit TFIIH core complex composed of XPB/SSL2, XPD/RAD3, SSL1, TFB1, TFB2, TFB4 and TFB5, which is active in NER. The core complex associates with the 3-subunit CTD-kinase module TFIIK composed of CCL1, KIN28 and TFB3 to form the 10-subunit holoenzyme (holo-TFIIH) active in transcription. An additionnal subunit, TFB6, plays a role in the dissociation of the SSL2 helicase from TFIIH after transcription initiation. Requires [4Fe-4S] cluster as cofactor. It depends on Mg(2+) as a cofactor.

It localises to the nucleus. It carries out the reaction Couples ATP hydrolysis with the unwinding of duplex DNA at the replication fork by translocating in the 5'-3' direction. This creates two antiparallel DNA single strands (ssDNA). The leading ssDNA polymer is the template for DNA polymerase III holoenzyme which synthesizes a continuous strand.. The catalysed reaction is ATP + H2O = ADP + phosphate + H(+). Its function is as follows. ATP-dependent 5'-3' DNA helicase. Component of the general transcription and DNA repair factor IIH (TFIIH) core complex, which is involved in general and transcription-coupled nucleotide excision repair (NER) of damaged DNA and, when complexed to TFIIK, in RNA transcription by RNA polymerase II. In NER, TFIIH acts by opening DNA around the lesion to allow the excision of the damaged oligonucleotide and its replacement by a new DNA fragment. The ATP-dependent helicase activity of XPD/RAD3 is required for DNA opening. In transcription, TFIIH has an essential role in transcription initiation. When the pre-initiation complex (PIC) has been established, TFIIH is required for promoter opening and promoter escape. Phosphorylation of the C-terminal tail (CTD) of the largest subunit of RNA polymerase II by the kinase module TFIIK controls the initiation of transcription. XPD/RAD3 acts by forming a bridge between TFIIK and the core-TFIIH complex. Involved in the maintenance of the fidelity of DNA replication. Has single-stranded DNA-dependent ATPase activity. 5'-3' DNA helicase activity requires ATP (dATP partially substitutes), will unwind over 800 bp dsDNA. Able to unwind an RNA:DNA hybrid. This is General transcription and DNA repair factor IIH helicase subunit XPD/RAD3 from Saccharomyces cerevisiae (strain ATCC 204508 / S288c) (Baker's yeast).